The primary structure comprises 431 residues: Trigger factor (431 aa).

The PPIase FKBP-type domain maps to 160 to 245 (DDRVTIDFVG…VKKVEVMVLP (86 aa)).

This sequence belongs to the FKBP-type PPIase family. Tig subfamily.

Its subcellular location is the cytoplasm. It carries out the reaction [protein]-peptidylproline (omega=180) = [protein]-peptidylproline (omega=0). Its function is as follows. Involved in protein export. Acts as a chaperone by maintaining the newly synthesized protein in an open conformation. Functions as a peptidyl-prolyl cis-trans isomerase. The sequence is that of Trigger factor from Mannheimia succiniciproducens (strain KCTC 0769BP / MBEL55E).